The following is a 187-amino-acid chain: MNLQHHFLIAMPTLTDPLFKQSVVYICTHNHEGAMGIVINKPVEQFTVASVLHKLKIIPIVDHASVQLNQPVFLGGPLADDRGFIIHTPKDGFGASIGISPQTMITTSKDVLETLGTHNQPDDILVALGYSGWEEGQLEHELRANTWLTIPANNQILFATPVSARWQAAAKILGININNIVNQIGHA.

This sequence belongs to the UPF0301 (AlgH) family.

This chain is UPF0301 protein BCI_0481, found in Baumannia cicadellinicola subsp. Homalodisca coagulata.